A 250-amino-acid chain; its full sequence is uncharacterized protein (250 aa).

Positions 1–24 (MKGFLKPNFSLGALFLTLSPIATA) are cleaved as a signal peptide. Cys25 is lipidated: N-palmitoyl cysteine. A lipid anchor (S-diacylglycerol cysteine) is attached at Cys25. The TNase-like domain maps to 44-200 (RLRKARVNHW…FNNRKNIFSY (157 aa)).

Its subcellular location is the cell membrane. This is an uncharacterized protein from Mycoplasma genitalium (strain ATCC 33530 / DSM 19775 / NCTC 10195 / G37) (Mycoplasmoides genitalium).